The sequence spans 427 residues: MQKNITNVSDTEQQLEIILTAEEYQPEYDQQLEEARRSIKIKGFRQGHVPVGMLKKMIGPSLEAEVAEKMASKHFSAIADEEKINPASRAQIDSFNFGDGELTIKISYEIHPEFELKDLSAYSFTQAEYSVTDEDVEREIKLILKGHGTMVTIEEAAGEGDTLIGDVTKLDADGNAVENGKNENHHFNLEYLPADNPFRMALEGRKAGDSVEVNVEPKEEGGEAIRYRVDVKEVKRLELPELDDELVKEITQQRFENVTDFKADVKLQLQAHFTDKSEQDLLEAMSAKLIEEHPVPTPKAMVASFQNMLLENAKRQMGGQFPKSLNEAEFLETLKPNAEKHARWLLVSQKIAKENELNVTDEDIKAYAEKEAEKEPSLTVEQLVSTYMSTEFKDYIIDTILKEKIYDVIKSKVTITKEATPIPEHQG.

The 81-residue stretch at 160–240 (GDTLIGDVTK…VKEVKRLELP (81 aa)) folds into the PPIase FKBP-type domain.

The protein belongs to the FKBP-type PPIase family. Tig subfamily.

Its subcellular location is the cytoplasm. The enzyme catalyses [protein]-peptidylproline (omega=180) = [protein]-peptidylproline (omega=0). In terms of biological role, involved in protein export. Acts as a chaperone by maintaining the newly synthesized protein in an open conformation. Functions as a peptidyl-prolyl cis-trans isomerase. In Chlorobaculum parvum (strain DSM 263 / NCIMB 8327) (Chlorobium vibrioforme subsp. thiosulfatophilum), this protein is Trigger factor.